Consider the following 545-residue polypeptide: CTP synthase (545 aa).

The tract at residues 1–266 (MTHFIFVTGG…DDLICERFGF (266 aa)) is amidoligase domain. Residue Ser-13 participates in CTP binding. Ser-13 provides a ligand contact to UTP. Residues 14 to 19 (SLGKGI) and Asp-71 contribute to the ATP site. Mg(2+) contacts are provided by Asp-71 and Glu-140. CTP contacts are provided by residues 147 to 149 (DIE), 187 to 192 (KTKPTQ), and Lys-223. Residues 187-192 (KTKPTQ) and Lys-223 contribute to the UTP site. 239–241 (KDA) serves as a coordination point for ATP. The Glutamine amidotransferase type-1 domain occupies 292–543 (RVAMVGKYVE…IDAAKTQHQK (252 aa)). Gly-353 contacts L-glutamine. Cys-380 (nucleophile; for glutamine hydrolysis) is an active-site residue. Residues 381–384 (LGMQ), Glu-404, and Arg-471 contribute to the L-glutamine site. Residues His-516 and Glu-518 contribute to the active site.

The protein belongs to the CTP synthase family. Homotetramer.

The enzyme catalyses UTP + L-glutamine + ATP + H2O = CTP + L-glutamate + ADP + phosphate + 2 H(+). It carries out the reaction L-glutamine + H2O = L-glutamate + NH4(+). The catalysed reaction is UTP + NH4(+) + ATP = CTP + ADP + phosphate + 2 H(+). The protein operates within pyrimidine metabolism; CTP biosynthesis via de novo pathway; CTP from UDP: step 2/2. With respect to regulation, allosterically activated by GTP, when glutamine is the substrate; GTP has no effect on the reaction when ammonia is the substrate. The allosteric effector GTP functions by stabilizing the protein conformation that binds the tetrahedral intermediate(s) formed during glutamine hydrolysis. Inhibited by the product CTP, via allosteric rather than competitive inhibition. In terms of biological role, catalyzes the ATP-dependent amination of UTP to CTP with either L-glutamine or ammonia as the source of nitrogen. Regulates intracellular CTP levels through interactions with the four ribonucleotide triphosphates. This chain is CTP synthase, found in Acinetobacter baumannii (strain AB307-0294).